A 206-amino-acid polypeptide reads, in one-letter code: Large ribosomal subunit protein uL4 (206 aa).

Belongs to the universal ribosomal protein uL4 family. As to quaternary structure, part of the 50S ribosomal subunit.

One of the primary rRNA binding proteins, this protein initially binds near the 5'-end of the 23S rRNA. It is important during the early stages of 50S assembly. It makes multiple contacts with different domains of the 23S rRNA in the assembled 50S subunit and ribosome. Its function is as follows. Forms part of the polypeptide exit tunnel. In Rhodopseudomonas palustris (strain ATCC BAA-98 / CGA009), this protein is Large ribosomal subunit protein uL4.